The primary structure comprises 140 residues: Organic hydroperoxide resistance protein-like 1 (140 aa).

This sequence belongs to the OsmC/Ohr family.

The polypeptide is Organic hydroperoxide resistance protein-like 1 (Staphylococcus epidermidis (strain ATCC 35984 / DSM 28319 / BCRC 17069 / CCUG 31568 / BM 3577 / RP62A)).